Consider the following 527-residue polypeptide: Optineurin (527 aa).

Disordered regions lie at residues 1–32 and 101–143; these read MSHQ…HPNL and SHEN…KDQL. A coiled-coil region spans residues 38-170; that stretch reads EELLQQMKEL…VSELQLKLNS (133 aa). The interval 58–209 is interaction with Rab8; it reads MKLNNQAMKG…GPTRTVSTSR (152 aa). The short motif at 176–181 is the LIR element; that stretch reads DSFVEI. Serine 177 is modified (phosphoserine; by TBK1). Residues 186–197 show a composition bias toward basic and acidic residues; it reads GEAEGSVKEIKH. Disordered stretches follow at residues 186-214 and 262-292; these read GEAE…LSKY and SDFE…EKGL. Serine 198 carries the post-translational modification Phosphoserine. The segment covering 201 to 210 has biased composition (polar residues); the sequence is PTRTVSTSRA. Residues 239–458 adopt a coiled-coil conformation; it reads CLREGNQKVE…LLKENDAFED (220 aa). Composition is skewed to basic and acidic residues over residues 262–274 and 281–292; these read SDFE…RSEI and STEKENDEEKGL. An interaction with HD region spans residues 361–527; the sequence is TRKESEKVDR…LQIHVMDCII (167 aa). The interval 362 to 470 is interaction with MYO6; that stretch reads RKESEKVDRA…RQSLMEMQSR (109 aa). The short motif at 424–429 is the UBAN element; sequence DFHAER. A Phosphoserine modification is found at serine 476. The CCHC NOA-type zinc finger occupies 497–527; it reads QRNIPIHSCPKCGEVLPDIDTLQIHVMDCII. Positions 505, 508, 521, and 525 each coordinate Zn(2+).

In terms of assembly, self-associates. Interacts with HD. Interacts with GTF3A. Interacts with MYO6. Interacts (via UBAN) with ubiquitinated TFRC. Interacts with GTP-bound Rab8 (RAB8A and/or RAB8B). Interacts with TBC1D17. Interacts with TBK1. Interacts with TRAF3. Binds to linear ubiquitin chains. Interacts with LC3 family members MAP1LC3A, MAP1LC3B, GABARAP, GABARAPL1 and GABARAPL2; OPTN phosphorylation increases the association (at least with MAP1LC3B). Interacts with RAB12; the interaction may be indirect. Interacts with TBK1; this interaction leads to the Golgi localization of TBK1 and its subsequent activation. Interacts with palmitoyltransferase ZDHHC17/HIP14; the interaction does not lead to palmitoylation of OPTN. Interacts with CYLD. Interacts with TOM1; the interaction is indirect and is mediated by MYO6, which acts as a bridge between TOM1 and OPTN. Interacts with USP12; the interaction is independent of USP12 deubiquitinase activity and may be involved in regulation of autophagic flux. Phosphorylated by TBK1, leading to restrict bacterial proliferation in case of infection.

Its subcellular location is the cytoplasm. It localises to the perinuclear region. It is found in the golgi apparatus. The protein localises to the trans-Golgi network. The protein resides in the cytoplasmic vesicle. Its subcellular location is the autophagosome. It localises to the recycling endosome. In terms of biological role, plays an important role in the maintenance of the Golgi complex, in membrane trafficking, in exocytosis, through its interaction with myosin VI and Rab8. Links myosin VI to the Golgi complex and plays an important role in Golgi ribbon formation. Negatively regulates the induction of IFNB in response to RNA virus infection. Plays a neuroprotective role in the eye and optic nerve. Probably part of the TNF-alpha signaling pathway that can shift the equilibrium toward induction of cell death. May act by regulating membrane trafficking and cellular morphogenesis via a complex that contains Rab8 and huntingtin (HD). Mediates the interaction of Rab8 with the probable GTPase-activating protein TBC1D17 during Rab8-mediated endocytic trafficking, such as that of transferrin receptor (TFRC/TfR); regulates Rab8 recruitment to tubules emanating from the endocytic recycling compartment. Autophagy receptor that interacts directly with both the cargo to become degraded and an autophagy modifier of the MAP1 LC3 family; targets ubiquitin-coated bacteria (xenophagy) and appears to function in the same pathway as SQSTM1 and CALCOCO2/NDP52. The polypeptide is Optineurin (OPTN) (Pongo abelii (Sumatran orangutan)).